Reading from the N-terminus, the 786-residue chain is Receptor-interacting serine/threonine-protein kinase 4 (786 aa).

The Protein kinase domain maps to F22–L286. ATP contacts are provided by residues V28–V36 and K51. A Glycyl lysine isopeptide (Lys-Gly) (interchain with G-Cter in ubiquitin) cross-link involves residue K51. The active-site Proton acceptor is D143. Residue K145 forms a Glycyl lysine isopeptide (Lys-Gly) (interchain with G-Cter in ubiquitin) linkage. 2 disordered regions span residues E293–F328 and Q347–S378. Basic and acidic residues predominate over residues K295–R319. Residues R357 to S378 are compositionally biased toward low complexity. ANK repeat units lie at residues S439–L468, K472–A501, D505–E534, E538–L567, D571–A601, D605–I634, Q638–A667, E671–A700, L704–D734, and Q736–L765.

The protein belongs to the protein kinase superfamily. TKL Ser/Thr protein kinase family. Interacts with PRKCB. Interacts with TRAF1, TRAF2, TRAF3 and TRAF5. Interacts with BIRC2/c-IAP1, BIRC3/c-IAP2 and XIAP/BIRC4. In terms of processing, may be phosphorylated by MAP3K2 and MAP3K3. Post-translationally, proteolytically cleaved by during Fas-induced apoptosis. Cleavage at Asp-342 and Asp-380. Polyubiquitinated with 'Lys-48' and 'Lys-63'-linked chains by BIRC2/c-IAP1 and BIRC3/c-IAP2, leading to activation of NF-kappa-B. As to expression, expressed in the epidermis of the skin (at protein level). Ubiquitously expressed, with an abundant expression in the thymus, bone marrow, pro-B, pre-B and immature B cells and a weak expression in the spleen.

Its subcellular location is the cytoplasm. It is found in the membrane. It catalyses the reaction L-seryl-[protein] + ATP = O-phospho-L-seryl-[protein] + ADP + H(+). The enzyme catalyses L-threonyl-[protein] + ATP = O-phospho-L-threonyl-[protein] + ADP + H(+). Serine/threonine protein kinase. Required for embryonic skin development and correct skin homeostasis in adults, via phosphorylation of PKP1 and subsequent promotion of keratinocyte differentiation and cell adhesion. It is a direct transcriptional target of TP63. Plays a role in NF-kappa-B activation. This chain is Receptor-interacting serine/threonine-protein kinase 4 (Ripk4), found in Mus musculus (Mouse).